Reading from the N-terminus, the 179-residue chain is Tegument protein UL55 homolog (179 aa).

It belongs to the alphaherpesvirinae HHV-1 UL55 family.

It localises to the virion tegument. It is found in the host nucleus matrix. This chain is Tegument protein UL55 homolog, found in Homo sapiens (Human).